Here is an 83-residue protein sequence, read N- to C-terminus: Turripeptide Lol11.2 (83 aa).

The signal sequence occupies residues 1-27 (MARLMMTVGCLIFIVVLLDMMVPVSNT).

It belongs to the conopeptide I2-like superfamily. In terms of processing, contains 4 disulfide bonds. As to expression, expressed by the venom duct.

It is found in the secreted. Its function is as follows. Acts as a neurotoxin by inhibiting voltage-gated potassium channels (Kv). This chain is Turripeptide Lol11.2, found in Iotyrris olangoensis (Sea snail).